A 155-amino-acid polypeptide reads, in one-letter code: Endoribonuclease YbeY (155 aa).

3 residues coordinate Zn(2+): histidine 117, histidine 121, and histidine 127.

Belongs to the endoribonuclease YbeY family. Requires Zn(2+) as cofactor.

It localises to the cytoplasm. Functionally, single strand-specific metallo-endoribonuclease involved in late-stage 70S ribosome quality control and in maturation of the 3' terminus of the 16S rRNA. The chain is Endoribonuclease YbeY from Treponema denticola (strain ATCC 35405 / DSM 14222 / CIP 103919 / JCM 8153 / KCTC 15104).